Here is a 415-residue protein sequence, read N- to C-terminus: Putative F-box protein At5g40050 (415 aa).

The 47-residue stretch at 13–59 (IDSISPLPDELLSHILSFLPTKRAASTSILSKRWRTLFPLMNHLCAS) folds into the F-box domain.

This Arabidopsis thaliana (Mouse-ear cress) protein is Putative F-box protein At5g40050.